Consider the following 352-residue polypeptide: tRNA N6-adenosine threonylcarbamoyltransferase (352 aa).

The Fe cation site is built by histidine 115 and histidine 119. Residues 138–142 (LVSGG), aspartate 171, glycine 184, and asparagine 276 each bind substrate. Residue aspartate 304 coordinates Fe cation.

It belongs to the KAE1 / TsaD family. It depends on Fe(2+) as a cofactor.

It is found in the cytoplasm. The enzyme catalyses L-threonylcarbamoyladenylate + adenosine(37) in tRNA = N(6)-L-threonylcarbamoyladenosine(37) in tRNA + AMP + H(+). In terms of biological role, required for the formation of a threonylcarbamoyl group on adenosine at position 37 (t(6)A37) in tRNAs that read codons beginning with adenine. Is involved in the transfer of the threonylcarbamoyl moiety of threonylcarbamoyl-AMP (TC-AMP) to the N6 group of A37, together with TsaE and TsaB. TsaD likely plays a direct catalytic role in this reaction. This is tRNA N6-adenosine threonylcarbamoyltransferase from Xanthomonas axonopodis pv. citri (strain 306).